Here is a 336-residue protein sequence, read N- to C-terminus: MAFADRLLAAWYAGHPALALLRPLEALYRRVVTRKRARFLSGESASYRAPVPVIVVGNITVGGTGKTPMILWLIEHCRRQGLKVGVVSRGYGAKPPQHPWHVQADQPAEQAGDEPLLIVQRTGVPLVIDPDRSRAVQALLASDAPDLILCDDGMQHYRLARDLELVLIDAVRGLGNRRCLPAGPLREPAERLGEADAVLFNGAEADRDDGFSFRLQPSALINLRSGERRALDLFPAGQALHAVAGIGNPQRFFNTLLGLNWQPVPHPFADHAPYSREVLSFSPPLPLVMTEKDAVKCRPFAADDWWYLAVDAVPSAAFSAWFDGQLDRLLPGRPRP.

ATP is bound at residue 60-67; it reads TVGGTGKT.

Belongs to the LpxK family.

It catalyses the reaction a lipid A disaccharide + ATP = a lipid IVA + ADP + H(+). The protein operates within glycolipid biosynthesis; lipid IV(A) biosynthesis; lipid IV(A) from (3R)-3-hydroxytetradecanoyl-[acyl-carrier-protein] and UDP-N-acetyl-alpha-D-glucosamine: step 6/6. In terms of biological role, transfers the gamma-phosphate of ATP to the 4'-position of a tetraacyldisaccharide 1-phosphate intermediate (termed DS-1-P) to form tetraacyldisaccharide 1,4'-bis-phosphate (lipid IVA). In Pseudomonas entomophila (strain L48), this protein is Tetraacyldisaccharide 4'-kinase.